We begin with the raw amino-acid sequence, 459 residues long: Ribulose bisphosphate carboxylase (459 aa).

Position 111 (asparagine 111) interacts with substrate. Lysine 166 (proton acceptor) is an active-site residue. Lysine 168 contacts substrate. The Mg(2+) site is built by lysine 191, aspartate 193, and glutamate 194. An N6-carboxylysine modification is found at lysine 191. Histidine 287 acts as the Proton acceptor in catalysis. Substrate contacts are provided by arginine 288, histidine 321, and serine 368.

It belongs to the RuBisCO large chain family. Type II subfamily. Homodimer. It depends on Mg(2+) as a cofactor.

It catalyses the reaction 2 (2R)-3-phosphoglycerate + 2 H(+) = D-ribulose 1,5-bisphosphate + CO2 + H2O. It carries out the reaction D-ribulose 1,5-bisphosphate + O2 = 2-phosphoglycolate + (2R)-3-phosphoglycerate + 2 H(+). Functionally, ruBisCO catalyzes two reactions: the carboxylation of D-ribulose 1,5-bisphosphate, the primary event in carbon dioxide fixation, as well as the oxidative fragmentation of the pentose substrate. Both reactions occur simultaneously and in competition at the same active site. The sequence is that of Ribulose bisphosphate carboxylase from Cereibacter sphaeroides (strain ATCC 17029 / ATH 2.4.9) (Rhodobacter sphaeroides).